The primary structure comprises 261 residues: Cytochrome c oxidase subunit 3 (261 aa).

Over 1–15 the chain is Mitochondrial matrix; it reads MTHQTHAYHMVNPSP. The chain crosses the membrane as a helical span at residues 16–34; it reads WPLTGALSALLMSSGLTMW. Topologically, residues 35-40 are mitochondrial intermembrane; sequence FHFNSL. A helical membrane pass occupies residues 41–66; that stretch reads ILLTTGLVTNILTMYQWWRDVIREST. The Mitochondrial matrix segment spans residues 67–72; the sequence is FQGHHT. Residues 73 to 105 form a helical membrane-spanning segment; that stretch reads PVVQKGLRYGMVLFIISEVLFFTGFFWAFYHSS. Residues 106-128 lie on the Mitochondrial intermembrane side of the membrane; sequence LAPTPELGGCWPPTGINPLNPLE. A helical transmembrane segment spans residues 129–152; sequence VPLLNTSVLLASGVSITWAHHSLM. Over 153–155 the chain is Mitochondrial matrix; the sequence is EGN. A helical membrane pass occupies residues 156 to 183; that stretch reads RKQMLQALFITIALGVYFTLLQASEYHE. The Mitochondrial intermembrane segment spans residues 184 to 190; that stretch reads ASFTISD. The helical transmembrane segment at 191-223 threads the bilayer; that stretch reads GVYGSTFFVATGFHGLHVIIGSTFLIVCFLRQL. Topologically, residues 224 to 232 are mitochondrial matrix; that stretch reads KFHFTSDHH. Residues 233–256 form a helical membrane-spanning segment; it reads FGFEAAAWYWHFVDVVWLFLYVSI. Residues 257 to 261 lie on the Mitochondrial intermembrane side of the membrane; the sequence is YWWGS.

The protein belongs to the cytochrome c oxidase subunit 3 family. As to quaternary structure, component of the cytochrome c oxidase (complex IV, CIV), a multisubunit enzyme composed of 14 subunits. The complex is composed of a catalytic core of 3 subunits MT-CO1, MT-CO2 and MT-CO3, encoded in the mitochondrial DNA, and 11 supernumerary subunits COX4I, COX5A, COX5B, COX6A, COX6B, COX6C, COX7A, COX7B, COX7C, COX8 and NDUFA4, which are encoded in the nuclear genome. The complex exists as a monomer or a dimer and forms supercomplexes (SCs) in the inner mitochondrial membrane with NADH-ubiquinone oxidoreductase (complex I, CI) and ubiquinol-cytochrome c oxidoreductase (cytochrome b-c1 complex, complex III, CIII), resulting in different assemblies (supercomplex SCI(1)III(2)IV(1) and megacomplex MCI(2)III(2)IV(2)).

The protein localises to the mitochondrion inner membrane. It carries out the reaction 4 Fe(II)-[cytochrome c] + O2 + 8 H(+)(in) = 4 Fe(III)-[cytochrome c] + 2 H2O + 4 H(+)(out). In terms of biological role, component of the cytochrome c oxidase, the last enzyme in the mitochondrial electron transport chain which drives oxidative phosphorylation. The respiratory chain contains 3 multisubunit complexes succinate dehydrogenase (complex II, CII), ubiquinol-cytochrome c oxidoreductase (cytochrome b-c1 complex, complex III, CIII) and cytochrome c oxidase (complex IV, CIV), that cooperate to transfer electrons derived from NADH and succinate to molecular oxygen, creating an electrochemical gradient over the inner membrane that drives transmembrane transport and the ATP synthase. Cytochrome c oxidase is the component of the respiratory chain that catalyzes the reduction of oxygen to water. Electrons originating from reduced cytochrome c in the intermembrane space (IMS) are transferred via the dinuclear copper A center (CU(A)) of subunit 2 and heme A of subunit 1 to the active site in subunit 1, a binuclear center (BNC) formed by heme A3 and copper B (CU(B)). The BNC reduces molecular oxygen to 2 water molecules using 4 electrons from cytochrome c in the IMS and 4 protons from the mitochondrial matrix. This is Cytochrome c oxidase subunit 3 (MT-CO3) from Hippopotamus amphibius (Hippopotamus).